The following is a 96-amino-acid chain: Neutrophil defensin 1 (96 aa).

The first 19 residues, 1-19, serve as a signal peptide directing secretion; the sequence is MRTLVILAAILLVALQAQA. A propeptide spanning residues 20-66 is cleaved from the precursor; it reads EPLQARTDEATAAQEQIPTDNPEVVVSLAWDESLAPKDSVPGLRKNM. 3 cysteine pairs are disulfide-bonded: Cys68/Cys96, Cys70/Cys85, and Cys75/Cys95. Tyr87 is modified (phosphotyrosine).

Tetramer. Dimer. Interacts with RETN. Post-translationally, ADP-ribosylation drastically reduces cytotoxic and antibacterial activities, and enhances IL8 production.

The protein resides in the secreted. Effector molecule of the innate immune system that acts via antibiotic-like properties against a broad array of infectious agents including bacteria, fungi, and viruses or by promoting the activation and maturation of some APCs. Interacts with the essential precursor of cell wall synthesis lipid II to inhibit bacterial cell wall synthesis. Inhibits adenovirus infection via inhibition of viral disassembly at the vertex region, thereby restricting the release of internal capsid protein pVI, which is required for endosomal membrane penetration during cell entry. In addition, interaction with adenovirus capsid leads to the redirection of viral particles to TLR4 thereby promoting a NLRP3-mediated inflammasome response and interleukin 1-beta (IL-1beta) release. Induces the production of proinflammatory cytokines including type I interferon (IFN) in plasmacytoid dendritic cells (pDCs) by triggering the degradation of NFKBIA and nuclear translocation of IRF1, both of which are required for activation of pDCs. The polypeptide is Neutrophil defensin 1 (Macaca mulatta (Rhesus macaque)).